The primary structure comprises 605 residues: uncharacterized protein (605 aa).

The disordered stretch occupies residues 111 to 151; sequence VNVNDGKPNDIELSSTSKTENDPPLSLHTTPDDLQGNGVNV.

It localises to the golgi apparatus. This is an uncharacterized protein from Schizosaccharomyces pombe (strain 972 / ATCC 24843) (Fission yeast).